The primary structure comprises 442 residues: MNVTETLNEGLKRGYSITVTAAELDAKVNEKLSEAQPEIEMKGFRKGKVPMALLKKQFGQKLLGEAMQETIDGAMAKHFEDSGDRPALQPEIKMTNEDWKEGDDIEVAMSYEALPEVPDTDFSTVTLEKLVVKADEEAVNEALQNLAENAKSFETKEGAAEDGDQVVIDFLGKVDGEAFEGGAAEDYPLVLGSNSFIPGFEEQLIGTSAGEEKNVDVSFPEQYQAEHLAGKAAVFECKIKEVKAPKAAEIDDEMAKQFGAEDLETLKGQISERLEAEYAGAARAVMKRKLLDELDTLVKFELPPSLVATEAGQIAHQLWHEENPEVEGHDHPEIEPTEEHNKLAERRVRLGLLLAELGQKNEIQVTDAEMTQAIMAQARQYPGQERQFFEFIQQNQQMQQQLRAPIFEDKVVDYIFELATVTEKEISKDDLQKAVEALDDEV.

One can recognise a PPIase FKBP-type domain in the interval 163–248 (GDQVVIDFLG…IKEVKAPKAA (86 aa)).

It belongs to the FKBP-type PPIase family. Tig subfamily.

The protein localises to the cytoplasm. It carries out the reaction [protein]-peptidylproline (omega=180) = [protein]-peptidylproline (omega=0). Involved in protein export. Acts as a chaperone by maintaining the newly synthesized protein in an open conformation. Functions as a peptidyl-prolyl cis-trans isomerase. In Dinoroseobacter shibae (strain DSM 16493 / NCIMB 14021 / DFL 12), this protein is Trigger factor.